The following is a 213-amino-acid chain: ATP-dependent Clp protease proteolytic subunit (213 aa).

Catalysis depends on Ser-114, which acts as the Nucleophile. His-139 is an active-site residue.

Belongs to the peptidase S14 family. As to quaternary structure, fourteen ClpP subunits assemble into 2 heptameric rings which stack back to back to give a disk-like structure with a central cavity, resembling the structure of eukaryotic proteasomes.

It is found in the cytoplasm. The catalysed reaction is Hydrolysis of proteins to small peptides in the presence of ATP and magnesium. alpha-casein is the usual test substrate. In the absence of ATP, only oligopeptides shorter than five residues are hydrolyzed (such as succinyl-Leu-Tyr-|-NHMec, and Leu-Tyr-Leu-|-Tyr-Trp, in which cleavage of the -Tyr-|-Leu- and -Tyr-|-Trp bonds also occurs).. Its function is as follows. Cleaves peptides in various proteins in a process that requires ATP hydrolysis. Has a chymotrypsin-like activity. Plays a major role in the degradation of misfolded proteins. The sequence is that of ATP-dependent Clp protease proteolytic subunit from Pseudomonas entomophila (strain L48).